A 514-amino-acid chain; its full sequence is Inosine-5'-monophosphate dehydrogenase (514 aa).

CBS domains are found at residues 112-171 and 175-233; these read FISK…DTPV and MTRR…PHST. NAD(+) contacts are provided by residues 270–272 and 320–322; these read DSS and GMG. Positions 322 and 324 each coordinate K(+). Ser325 lines the IMP pocket. Cys327 is a K(+) binding site. Catalysis depends on Cys327, which acts as the Thioimidate intermediate. IMP is bound by residues 360–362, 383–384, and 407–411; these read DGG, GG, and YRGMG. Arg425 (proton acceptor) is an active-site residue. Position 437 (Gln437) interacts with IMP. Glu496, Gly497, and Gly498 together coordinate K(+). The Microbody targeting signal motif lies at 512 to 514; the sequence is AKM.

Belongs to the IMPDH/GMPR family. In terms of assembly, heterotetramer. Interacts with glycosomal protein sorting receptor PEX5. K(+) is required as a cofactor.

It is found in the glycosome. The enzyme catalyses IMP + NAD(+) + H2O = XMP + NADH + H(+). It participates in purine metabolism; XMP biosynthesis via de novo pathway; XMP from IMP: step 1/1. Its activity is regulated as follows. Mycophenolic acid (MPA) is a non-competitive inhibitor that prevents formation of the closed enzyme conformation by binding to the same site as the amobile flap. In contrast, mizoribine monophosphate (MZP) is a competitive inhibitor that induces the closed conformation. MPA is a potent inhibitor of mammalian IMPDHs but a poor inhibitor of the bacterial enzymes. MZP is a more potent inhibitor of bacterial IMPDH. Potently inhibited by MPA. Inhibited by XMP and GMP. In terms of biological role, catalyzes the conversion of inosine 5'-phosphate (IMP) to xanthosine 5'-phosphate (XMP), the first committed and rate-limiting step in the de novo synthesis of guanine nucleotides, and therefore plays an important role in the regulation of cell growth. The polypeptide is Inosine-5'-monophosphate dehydrogenase (Leishmania donovani).